We begin with the raw amino-acid sequence, 159 residues long: Protein Smg homolog (159 aa).

This sequence belongs to the Smg family.

The chain is Protein Smg homolog from Shewanella amazonensis (strain ATCC BAA-1098 / SB2B).